Here is a 239-residue protein sequence, read N- to C-terminus: MNIDIVISADHIDEKRLINKTVIIIDILRATSVITTAINNGCKKVIPVLTVEEAKDIAKNSKEDIILGGERNALKIDGFNFSNSPLEYTKNYVEGKTVVLSTTNGTRAINNSFNAKTILISALINSKATAKAIDKLNEDLIIINSGTNGQFSIDDFICSGYLIDCLYNIRKDLELSDIAKTAHYIYMNNKDIESFVKKATHYSRLKSLNLEKDLEYCFQKDIIDVVPQYKDGYIIKSNI.

The protein belongs to the ComB family. Requires Mg(2+) as cofactor.

The enzyme catalyses (2R)-O-phospho-3-sulfolactate + H2O = (2R)-3-sulfolactate + phosphate. The sequence is that of Probable 2-phosphosulfolactate phosphatase from Clostridium botulinum (strain Okra / Type B1).